A 368-amino-acid chain; its full sequence is C-X-C chemokine receptor type 3 (368 aa).

The Extracellular portion of the chain corresponds to 1–53; it reads MVLEVSDHQVLNDAEVAALLENFSSSYDYGENESDSCCTSPPCPQDFSLNFDR. Asn-22 is a glycosylation site (N-linked (GlcNAc...) asparagine). 2 positions are modified to sulfotyrosine: Tyr-27 and Tyr-29. Asn-32 is a glycosylation site (N-linked (GlcNAc...) asparagine). The helical transmembrane segment at 54 to 80 threads the bilayer; it reads AFLPALYSLLFLLGLLGNGAVAAVLLS. The Cytoplasmic segment spans residues 81 to 89; that stretch reads RRTALSSTD. Residues 90-110 traverse the membrane as a helical segment; the sequence is TFLLHLAVADTLLVLTLPLWA. The Extracellular portion of the chain corresponds to 111 to 125; the sequence is VDAAVQWVFGSGLCK. Cysteines 124 and 203 form a disulfide. A helical transmembrane segment spans residues 126–147; that stretch reads VAGALFNINFYAGALLLACISF. The Cytoplasmic segment spans residues 148–169; it reads DRYLNIVHATQLYRRGPPARVT. The helical transmembrane segment at 170–189 threads the bilayer; that stretch reads LTCLAVWGLCLLFALPDFIF. Residues 190 to 212 are Extracellular-facing; sequence LSAHHDERLNATHCQYNFPQVGR. A helical transmembrane segment spans residues 213 to 233; sequence TALRVLQLVAGFLLPLLVMAY. Residues 234–255 lie on the Cytoplasmic side of the membrane; the sequence is CYAHILAVLLVSRGQRRLRAMR. A helical membrane pass occupies residues 256-277; sequence LVVVVVVAFALCWTPYHLVVLV. The Extracellular segment spans residues 278-298; the sequence is DILMDLGALARNCGRESRVDV. The helical transmembrane segment at 299 to 321 threads the bilayer; that stretch reads AKSVTSGLGYMHCCLNPLLYAFV. Residues 322-368 lie on the Cytoplasmic side of the membrane; it reads GVKFRERMWMLLLRLGCPNQRGLQRQPSSSRRDSSWSETSEASYSGL. The disordered stretch occupies residues 342 to 368; that stretch reads RGLQRQPSSSRRDSSWSETSEASYSGL. Low complexity predominate over residues 357–368; that stretch reads WSETSEASYSGL.

It belongs to the G-protein coupled receptor 1 family. In terms of assembly, homomer. Forms heteromers with ACKR4. Interacts with PF4/CXCL4. Sulfation on Tyr-27 and Tyr-29 is essential for CXCL10 binding and subsequent signal transduction induction. Post-translationally, N-glycosylated. Isoform 1 and isoform 2 are mainly expressed in heart, kidney, liver and skeletal muscle. Isoform 1 is also expressed in placenta. Isoform 2 is expressed in endothelial cells. Expressed in T-cells (at protein level).

It localises to the cell membrane. Receptor for the C-X-C chemokine CXCL9, CXCL10 and CXCL11 and mediates the proliferation, survival and angiogenic activity of human mesangial cells (HMC) through a heterotrimeric G-protein signaling pathway. Binds to CCL21. Probably promotes cell chemotaxis response. Upon activation by PF4, induces activated T-lymphocytes migration mediated via downstream Ras/extracellular signal-regulated kinase (ERK) signaling. Functionally, receptor for the C-X-C chemokine CXCL4 and also mediates the inhibitory activities of CXCL9, CXCL10 and CXCL11 on the proliferation, survival and angiogenic activity of human microvascular endothelial cells (HMVEC) through a cAMP-mediated signaling pathway. Does not promote cell chemotaxis respons. Interaction with CXCL4 or CXCL10 leads to activation of the p38MAPK pathway and contributes to inhibition of angiogenesis. Overexpression in renal cancer cells down-regulates expression of the anti-apoptotic protein HMOX1 and promotes apoptosis. In terms of biological role, mediates the activity of CXCL11. The protein is C-X-C chemokine receptor type 3 (CXCR3) of Homo sapiens (Human).